Consider the following 322-residue polypeptide: F-actin-capping protein subunit beta (322 aa).

The protein belongs to the F-actin-capping protein beta subunit family. As to quaternary structure, component of the F-actin capping complex, composed of a heterodimer of an alpha and a beta subunit.

The protein resides in the cytoplasm. It localises to the cytoskeleton. The protein localises to the actin patch. In terms of biological role, F-actin-capping proteins bind in a Ca(2+)-independent manner to the fast growing ends of actin filaments (barbed end) thereby blocking the exchange of subunits at these ends. Unlike other capping proteins (such as gelsolin and severin), these proteins do not sever actin filaments. This chain is F-actin-capping protein subunit beta (cap2), found in Aspergillus fumigatus (strain ATCC MYA-4609 / CBS 101355 / FGSC A1100 / Af293) (Neosartorya fumigata).